Consider the following 714-residue polypeptide: Delta-like protein 1 (714 aa).

Residues 1–17 (MGRRSALALAVVSALLC) form the signal peptide. Residues 18-537 (QVWSSGVFEL…VAAQGGSFPW (520 aa)) are Extracellular-facing. A DSL domain is found at 176–220 (FVCDEHYYGEGCSVFCRPRDDAFGHFTCGERGEKMCDPGWKGQYC). 27 disulfide bridges follow: cysteine 178–cysteine 187, cysteine 191–cysteine 203, cysteine 211–cysteine 220, cysteine 225–cysteine 236, cysteine 229–cysteine 242, cysteine 244–cysteine 253, cysteine 256–cysteine 267, cysteine 262–cysteine 273, cysteine 275–cysteine 284, cysteine 291–cysteine 303, cysteine 297–cysteine 313, cysteine 315–cysteine 324, cysteine 331–cysteine 342, cysteine 336–cysteine 351, cysteine 353–cysteine 362, cysteine 369–cysteine 380, cysteine 374–cysteine 390, cysteine 392–cysteine 401, cysteine 408–cysteine 419, cysteine 413–cysteine 428, cysteine 430–cysteine 439, cysteine 446–cysteine 457, cysteine 451–cysteine 466, cysteine 468–cysteine 477, cysteine 484–cysteine 495, cysteine 489–cysteine 504, and cysteine 506–cysteine 515. EGF-like domains follow at residues 225-253 (CLPG…GRYC), 256-284 (CIRY…GLFC), and 291-324 (CTHH…GANC). Residues 331 to 362 (CAPSPCRNGGSCTDLEDSYSCTCPPGFYGKVC) form the EGF-like 4; calcium-binding domain. 2 consecutive EGF-like domains span residues 369-401 (CADG…GFNC) and 408-439 (CSSS…GRYC). One can recognise an EGF-like 7; calcium-binding domain in the interval 446–477 (CASSPCANGGTCRDSVNDFSCTCPPGYTGRNC). Asparagine 476 is a glycosylation site (N-linked (GlcNAc...) asparagine). The 32-residue stretch at 484–515 (CEHAPCHNGATCHQRGQRYMCECAQGYGGANC) folds into the EGF-like 8 domain. The chain crosses the membrane as a helical span at residues 538–560 (VAVCAGVVLVLLLLLGCAAVVVC). At 561-714 (VRLKLQKHQP…KDECVIATEV (154 aa)) the chain is on the cytoplasmic side. Lysine 605 participates in a covalent cross-link: Glycyl lysine isopeptide (Lys-Gly) (interchain with G-Cter in ubiquitin). Phosphothreonine is present on threonine 630. Basic and acidic residues predominate over residues 644-656 (ATVRDAHSKRDTK). The segment at 644-690 (ATVRDAHSKRDTKCQSQGSVGEEKSTSTLRGGEVPDRKRPESVYSTS) is disordered. Serine 685 carries the phosphoserine; by PKB modification. Residue serine 688 is modified to Phosphoserine. Positions 711–714 (ATEV) are interaction with MAGI1.

As to quaternary structure, homodimer. Interacts with TJP1. Interacts with MAGI1 (via PDZ domain); forms a complex with CTNNB1 and CDH2 and promotes recruitment to the adherens junction and stabilization on the cell surface. Interacts with PSEN1; undergoes a presenilin-dependent gamma-secretase cleavage that releases a Dll1-intracellular form. Interacts with MFAP5. Interacts with MIB1. Interacts with NEURL1B; leads to ubiquitination. Interacts with NEURL1. Interacts with SYNJ2BP; enhances DLL1 protein stability, and promotes Notch signaling in endothelial cells. Interacts with MAGI1, MAGI2, MAGI3 and MPDZ. Interacts (via ubiquitin) with EPN1 (via IUM domain); binding with NOTCH1 attached to neighboring cell, promotes ligand ubiquitination and EPN1 interaction, leading to NECD transendocytosis and Notch signaling. Interacts with NOTCH1. Post-translationally, ubiquitinated by MIB (MIB1 or MIB2), leading to its endocytosis and subsequent degradation. Ubiquitinated; promotes recycling back to the plasma membrane and confers a strong affinity for NOTCH1. Mono- and multi-ubiquitinated. Multi-ubiquitination of Lys-605 by MIB1 promotes both cis and trans-interaction with NOTCH1, as well as activation of Notch signaling. Ubiquitinated by NEURL1B. Phosphorylated in a membrane association-dependent manner. Phosphorylation at Ser-688 requires the presence of Ser-685, whereas phosphorylation at Thr-630 and Ser-685 occur independently of the other sites. Phosphorylation is required for full ligand activity in vitro and affects surface presentation, ectodomain shedding, and endocytosis. In terms of processing, O-fucosylated. Can be elongated to a disaccharide by MFNG.

The protein localises to the apical cell membrane. The protein resides in the cell junction. Its subcellular location is the adherens junction. It localises to the membrane raft. In terms of biological role, transmembrane ligand protein of NOTCH1, NOTCH2 and NOTCH3 receptors that binds the extracellular domain (ECD) of Notch receptor in a cis and trans fashion manner. Following transinteraction, ligand cells produce mechanical force that depends of a clathrin-mediated endocytosis, requiring ligand ubiquitination, EPN1 interaction, and actin polymerisation; these events promote Notch receptor extracellular domain (NECD) transendocytosis and triggers Notch signaling through induction of cleavage, hyperphosphorylation, and nuclear accumulation of the intracellular domain of Notch receptors (NICD). Is required for embryonic development and maintenance of adult stem cells in many different tissues and immune systeme; the DLL1-induced Notch signaling is mediated through an intercellular communication that regulates cell lineage, cell specification, cell patterning and morphogenesis through effects on differentiation and proliferation. Plays a role in brain development at different level, namely by regulating neuronal differentiation of neural precursor cells via cell-cell interaction, most likely through the lateral inhibitory system in an endogenous level dependent-manner. During neocortex development, Dll1-Notch signaling transmission is mediated by dynamic interactions between intermediate neurogenic progenitors and radial glia; the cell-cell interactions are mediated via dynamic and transient elongation processes, likely to reactivate/maintain Notch activity in neighboring progenitors, and coordinate progenitor cell division and differentiation across radial and zonal boundaries. During cerebellar development, regulates Bergmann glial monolayer formation and its morphological maturation through a Notch signaling pathway. At the retina and spinal cord level, regulates neurogenesis by preventing the premature differentiation of neural progenitors and also by maintaining progenitors in spinal cord through Notch signaling pathway. Also controls neurogenesis of the neural tube in a progenitor domain-specific fashion along the dorsoventral axis. Maintains quiescence of neural stem cells and plays a role as a fate determinant that segregates asymmetrically to one daughter cell during neural stem cells mitosis, resulting in neuronal differentiation in Dll1-inheriting cell. Plays a role in immune systeme development, namely the development of all T-cells and marginal zone (MZ) B cells. Blocks the differentiation of progenitor cells into the B-cell lineage while promoting the emergence of a population of cells with the characteristics of a T-cell/NK-cell precursor. Also plays a role during muscle development. During early development, inhibits myoblasts differentiation from the medial dermomyotomal lip and later regulates progenitor cell differentiation. Directly modulates cell adhesion and basal lamina formation in satellite cells through Notch signaling. Maintains myogenic progenitors pool by suppressing differentiation through down-regulation of MYOD1 and is required for satellite cell homing and PAX7 expression. During craniofacial and trunk myogenesis suppresses differentiation of cranial mesoderm-derived and somite-derived muscle via MYOD1 regulation but in cranial mesoderm-derived progenitors, is neither required for satellite cell homing nor for PAX7 expression. Also plays a role during pancreatic cell development. During type B pancreatic cell development, may be involved in the initiation of proximodistal patterning in the early pancreatic epithelium. Stimulates multipotent pancreatic progenitor cells proliferation and pancreatic growth by maintaining HES1 expression and PTF1A protein levels. During fetal stages of development, is required to maintain arterial identity and the responsiveness of arterial endothelial cells for VEGFA through regulation of KDR activation and NRP1 expression. Controls sprouting angiogenesis and subsequent vertical branch formation through regulation on tip cell differentiation. Negatively regulates goblet cell differentiation in intestine and controls secretory fat commitment through lateral inhibition in small intestine. Plays a role during inner ear development; negatively regulates auditory hair cell differentiation. Plays a role during nephron development through Notch signaling pathway. Regulates growth, blood pressure and energy homeostasis. This is Delta-like protein 1 (Dll1) from Rattus norvegicus (Rat).